The chain runs to 194 residues: Peptidyl-tRNA hydrolase (194 aa).

Tyrosine 17 provides a ligand contact to tRNA. Histidine 22 serves as the catalytic Proton acceptor. Tyrosine 68, asparagine 70, and asparagine 116 together coordinate tRNA.

Belongs to the PTH family. Monomer.

It is found in the cytoplasm. The catalysed reaction is an N-acyl-L-alpha-aminoacyl-tRNA + H2O = an N-acyl-L-amino acid + a tRNA + H(+). Its function is as follows. Hydrolyzes ribosome-free peptidyl-tRNAs (with 1 or more amino acids incorporated), which drop off the ribosome during protein synthesis, or as a result of ribosome stalling. In terms of biological role, catalyzes the release of premature peptidyl moieties from peptidyl-tRNA molecules trapped in stalled 50S ribosomal subunits, and thus maintains levels of free tRNAs and 50S ribosomes. This chain is Peptidyl-tRNA hydrolase, found in Pseudomonas savastanoi pv. phaseolicola (strain 1448A / Race 6) (Pseudomonas syringae pv. phaseolicola (strain 1448A / Race 6)).